The following is a 212-amino-acid chain: Imidazole glycerol phosphate synthase subunit HisH (212 aa).

The region spanning 2-212 is the Glutamine amidotransferase type-1 domain; that stretch reads RVVVIDYNGG…ILGNFLRWTS (211 aa). The Nucleophile role is filled by Cys-85. Active-site residues include His-192 and Glu-194.

As to quaternary structure, heterodimer of HisH and HisF.

It localises to the cytoplasm. It carries out the reaction 5-[(5-phospho-1-deoxy-D-ribulos-1-ylimino)methylamino]-1-(5-phospho-beta-D-ribosyl)imidazole-4-carboxamide + L-glutamine = D-erythro-1-(imidazol-4-yl)glycerol 3-phosphate + 5-amino-1-(5-phospho-beta-D-ribosyl)imidazole-4-carboxamide + L-glutamate + H(+). The enzyme catalyses L-glutamine + H2O = L-glutamate + NH4(+). The protein operates within amino-acid biosynthesis; L-histidine biosynthesis; L-histidine from 5-phospho-alpha-D-ribose 1-diphosphate: step 5/9. Its function is as follows. IGPS catalyzes the conversion of PRFAR and glutamine to IGP, AICAR and glutamate. The HisH subunit catalyzes the hydrolysis of glutamine to glutamate and ammonia as part of the synthesis of IGP and AICAR. The resulting ammonia molecule is channeled to the active site of HisF. This chain is Imidazole glycerol phosphate synthase subunit HisH, found in Gluconobacter oxydans (strain 621H) (Gluconobacter suboxydans).